The primary structure comprises 449 residues: 3-phosphoshikimate 1-carboxyvinyltransferase (449 aa).

The disordered stretch occupies residues 1 to 23 (MSHSASPKPATARRSEALTGEIR). 3 residues coordinate 3-phosphoshikimate: Lys28, Ser29, and Arg33. Lys28 contributes to the phosphoenolpyruvate binding site. Phosphoenolpyruvate-binding residues include Gly100 and Arg128. 3-phosphoshikimate is bound by residues Ser173, Gln175, Asp326, and Lys353. Residue Gln175 participates in phosphoenolpyruvate binding. Asp326 (proton acceptor) is an active-site residue. Residues Arg357 and Arg402 each contribute to the phosphoenolpyruvate site.

This sequence belongs to the EPSP synthase family. In terms of assembly, monomer.

The protein localises to the cytoplasm. The catalysed reaction is 3-phosphoshikimate + phosphoenolpyruvate = 5-O-(1-carboxyvinyl)-3-phosphoshikimate + phosphate. The protein operates within metabolic intermediate biosynthesis; chorismate biosynthesis; chorismate from D-erythrose 4-phosphate and phosphoenolpyruvate: step 6/7. Catalyzes the transfer of the enolpyruvyl moiety of phosphoenolpyruvate (PEP) to the 5-hydroxyl of shikimate-3-phosphate (S3P) to produce enolpyruvyl shikimate-3-phosphate and inorganic phosphate. This Pseudomonas sp. (strain PG2982) protein is 3-phosphoshikimate 1-carboxyvinyltransferase.